Here is a 205-residue protein sequence, read N- to C-terminus: N-(5'-phosphoribosyl)anthranilate isomerase (205 aa).

Belongs to the TrpF family.

The enzyme catalyses N-(5-phospho-beta-D-ribosyl)anthranilate = 1-(2-carboxyphenylamino)-1-deoxy-D-ribulose 5-phosphate. Its pathway is amino-acid biosynthesis; L-tryptophan biosynthesis; L-tryptophan from chorismate: step 3/5. The protein is N-(5'-phosphoribosyl)anthranilate isomerase of Phocaeicola vulgatus (strain ATCC 8482 / DSM 1447 / JCM 5826 / CCUG 4940 / NBRC 14291 / NCTC 11154) (Bacteroides vulgatus).